Here is a 217-residue protein sequence, read N- to C-terminus: Transcriptional regulatory protein CutR (217 aa).

One can recognise a Response regulatory domain in the interval R2–G116. D51 bears the 4-aspartylphosphate mark. Positions P124 to I217 form a DNA-binding region, ompR/PhoB-type.

Member of the two-component regulatory system CutS/CutR, involved in the regulation of copper metabolism. CutR suppresses a defective melC1 gene, encoding a putative copper-transfer gene, probably by altering copper metabolism. The polypeptide is Transcriptional regulatory protein CutR (cutR) (Streptomyces lividans).